The primary structure comprises 185 residues: Ribosome-recycling factor (185 aa).

It belongs to the RRF family.

It is found in the cytoplasm. Responsible for the release of ribosomes from messenger RNA at the termination of protein biosynthesis. May increase the efficiency of translation by recycling ribosomes from one round of translation to another. The sequence is that of Ribosome-recycling factor from Xylella fastidiosa (strain Temecula1 / ATCC 700964).